The following is an 85-amino-acid chain: Phosphocarrier protein HPr (85 aa).

The region spanning 1-85 is the HPr domain; that stretch reads MFQQEVTITA…HLVKLMAELE (85 aa). H15 functions as the Pros-phosphohistidine intermediate in the catalytic mechanism.

This sequence belongs to the HPr family.

The protein resides in the cytoplasm. Its function is as follows. General (non sugar-specific) component of the phosphoenolpyruvate-dependent sugar phosphotransferase system (sugar PTS). This major carbohydrate active-transport system catalyzes the phosphorylation of incoming sugar substrates concomitantly with their translocation across the cell membrane. The phosphoryl group from phosphoenolpyruvate (PEP) is transferred to the phosphoryl carrier protein HPr by enzyme I. Phospho-HPr then transfers it to the PTS EIIA domain. In Escherichia coli O157:H7, this protein is Phosphocarrier protein HPr (ptsH).